A 464-amino-acid polypeptide reads, in one-letter code: Mannose-1-phosphate guanylyltransferase (464 aa).

Belongs to the mannose-6-phosphate isomerase type 2 family.

The catalysed reaction is alpha-D-mannose 1-phosphate + GTP + H(+) = GDP-alpha-D-mannose + diphosphate. The protein operates within nucleotide-sugar biosynthesis; GDP-alpha-D-mannose biosynthesis; GDP-alpha-D-mannose from alpha-D-mannose 1-phosphate (GTP route): step 1/1. It participates in bacterial outer membrane biogenesis; LPS O-antigen biosynthesis. Its function is as follows. Involved in GDP-mannose biosynthesis which serves as the activated sugar nucleotide precursor for mannose residues in cell surface polysaccharides. This enzyme participates in synthesis of the LPS O7 antigen. The polypeptide is Mannose-1-phosphate guanylyltransferase (manC) (Escherichia coli).